A 184-amino-acid polypeptide reads, in one-letter code: MAAHKVNFITGNANKLREVKAILEPEIEVTSKSIDLEEVQGTLEEVTESKCRRAAELVKGPVLVEDTALCYTALGGLPGAYIKWFLTTIGHQGLNNLLAAYTDKSAEAVCTFGYCAGPGEKVILFQGRCPGKIVPARGPNNFGWDPVFEYEGQTFAEMDKVEKNKISHRSRALAKLQAWFKEQQ.

10 to 15 (TGNANK) is a binding site for ITP. E38 serves as a coordination point for Mg(2+). ITP contacts are provided by residues K50, 66 to 67 (DT), K83, 142 to 145 (FGWD), K163, and 168 to 169 (HR).

Belongs to the HAM1 NTPase family. In terms of assembly, homodimer. It depends on Mg(2+) as a cofactor. Mn(2+) is required as a cofactor.

The protein localises to the cytoplasm. It localises to the nucleus. The catalysed reaction is ITP + H2O = IMP + diphosphate + H(+). It carries out the reaction dITP + H2O = dIMP + diphosphate + H(+). The enzyme catalyses XTP + H2O = XMP + diphosphate + H(+). In terms of biological role, pyrophosphatase that hydrolyzes non-canonical purine nucleotides such as inosine triphosphate (ITP), deoxyinosine triphosphate (dITP) or xanthosine 5'-triphosphate (XTP) to their respective monophosphate derivatives. The enzyme does not distinguish between the deoxy- and ribose forms. Probably excludes non-canonical purines from RNA and DNA precursor pools, thus preventing their incorporation into RNA and DNA and avoiding chromosomal lesions. The sequence is that of Inosine triphosphate pyrophosphatase from Fusarium vanettenii (strain ATCC MYA-4622 / CBS 123669 / FGSC 9596 / NRRL 45880 / 77-13-4) (Fusarium solani subsp. pisi).